Reading from the N-terminus, the 516-residue chain is Melianol synthase CYP71BQ17 (516 aa).

Residues 14–34 (MPHLPSLPVSLSFLLFFLMLV) traverse the membrane as a helical segment. Cys-454 contacts heme.

This sequence belongs to the cytochrome P450 family. The cofactor is heme. In terms of tissue distribution, mainly expressed in roots and, to a lesser extent, in stems and old leaves.

The protein resides in the membrane. The enzyme catalyses dihydroniloticin + 2 reduced [NADPH--hemoprotein reductase] + 2 O2 = melianol + 2 oxidized [NADPH--hemoprotein reductase] + 3 H2O + 2 H(+). The protein operates within secondary metabolite biosynthesis; terpenoid biosynthesis. Its function is as follows. Monooxygenase involved in the biosynthesis of quassinoids triterpene natural products such as ailanthone, chaparrinone, glaucarubinone and amarolide, allelopathic degraded triterpene lactones inhibiting the growth of other plants, and possessing antimalarial, antifeedant, insecticidal, anti-inflammatory and anticancer activities. Catalyzes the conversion of dihydroniloticin to the protolimonoid melianol. The protein is Melianol synthase CYP71BQ17 of Ailanthus altissima (Tree-of-heaven).